Here is a 141-residue protein sequence, read N- to C-terminus: Small ribosomal subunit protein bS6 (141 aa).

The disordered stretch occupies residues 97 to 141 (TGQSEMLKAEENRSERRERRDRPEHADSADGDDSDNSDASDNADE). Positions 103-124 (LKAEENRSERRERRDRPEHADS) are enriched in basic and acidic residues. Positions 125-141 (ADGDDSDNSDASDNADE) are enriched in acidic residues.

It belongs to the bacterial ribosomal protein bS6 family.

Its function is as follows. Binds together with bS18 to 16S ribosomal RNA. The protein is Small ribosomal subunit protein bS6 of Pseudomonas fluorescens (strain ATCC BAA-477 / NRRL B-23932 / Pf-5).